Reading from the N-terminus, the 496-residue chain is Probable chlorophyll(ide) b reductase NYC1, chloroplastic (496 aa).

A chloroplast-targeting transit peptide spans 1–43 (MTTLTKIQVYPQVLEHRLFFRDPIRVGSRLTCRERSNRVYVHR). 2 helical membrane-spanning segments follow: residues 105–125 (YIVTMTSTGAILLIGFQLSGG) and 132–152 (LVWYSWLGGIIIGTMTGANMV). An NAD(+)-binding site is contributed by 166–190 (ITGSTRGLGKALAREFLLSGDRVIV). Positions 195–224 (SESVDMTVKELEQNLKEIMSNASESARKKL) form a coiled coil. The active-site Proton acceptor is the Tyr330. The helical transmembrane segment at 470 to 490 (WVSVFSLSVVCAFIILQSTTP) threads the bilayer.

The protein belongs to the short-chain dehydrogenases/reductases (SDR) family. In terms of assembly, interacts with NOL to form a complex that acts as a chlorophyll b reductase. Interacts with HCAR, RCCR, SGR1 and the LHCII complex. Part of a SGR1-CCE-LHCII complex, which acts in chlorophyll breakdown.

The protein resides in the plastid. Its subcellular location is the chloroplast thylakoid membrane. The catalysed reaction is 7(1)-hydroxychlorophyllide a + NAD(+) = chlorophyllide b + NADH + H(+). It catalyses the reaction 7(1)-hydroxychlorophyllide a + NADP(+) = chlorophyllide b + NADPH + H(+). Functionally, involved in chlorophyll b degradation. Belongs to the chlorophyll catabolic enzymes (CCEs). The polypeptide is Probable chlorophyll(ide) b reductase NYC1, chloroplastic (NYC1) (Arabidopsis thaliana (Mouse-ear cress)).